The chain runs to 394 residues: LL-diaminopimelate aminotransferase (394 aa).

Substrate is bound by residues Tyr-14 and Gly-41. Pyridoxal 5'-phosphate is bound by residues Tyr-71, 104-105 (AK), Tyr-128, Asn-174, Tyr-205, and 233-235 (SFS). Substrate-binding residues include Lys-105, Tyr-128, and Asn-174. Lys-236 carries the N6-(pyridoxal phosphate)lysine modification. Residues Arg-244 and Asn-275 each contribute to the pyridoxal 5'-phosphate site. Substrate contacts are provided by Asn-275 and Arg-369.

This sequence belongs to the class-I pyridoxal-phosphate-dependent aminotransferase family. LL-diaminopimelate aminotransferase subfamily. Homodimer. It depends on pyridoxal 5'-phosphate as a cofactor.

The catalysed reaction is (2S,6S)-2,6-diaminopimelate + 2-oxoglutarate = (S)-2,3,4,5-tetrahydrodipicolinate + L-glutamate + H2O + H(+). Its pathway is amino-acid biosynthesis; L-lysine biosynthesis via DAP pathway; LL-2,6-diaminopimelate from (S)-tetrahydrodipicolinate (aminotransferase route): step 1/1. Functionally, involved in the synthesis of meso-diaminopimelate (m-DAP or DL-DAP), required for both lysine and peptidoglycan biosynthesis. Catalyzes the direct conversion of tetrahydrodipicolinate to LL-diaminopimelate. This chain is LL-diaminopimelate aminotransferase, found in Chlamydia trachomatis serovar L2b (strain UCH-1/proctitis).